We begin with the raw amino-acid sequence, 78 residues long: RNA-binding protein Hfq (78 aa).

The Sm domain maps to 10–69 (DPFLNALRKEHVPVSIYLVNGIKLQGHIESFDQYVVLLRNTVTQMVYKHAISTVVPARAV).

Belongs to the Hfq family. Homohexamer.

Its function is as follows. RNA chaperone that binds small regulatory RNA (sRNAs) and mRNAs to facilitate mRNA translational regulation in response to envelope stress, environmental stress and changes in metabolite concentrations. Also binds with high specificity to tRNAs. The chain is RNA-binding protein Hfq from Janthinobacterium sp. (strain Marseille) (Minibacterium massiliensis).